The chain runs to 87 residues: UPF0367 protein Pro_0144 (87 aa).

Belongs to the UPF0367 family.

The chain is UPF0367 protein Pro_0144 from Prochlorococcus marinus (strain SARG / CCMP1375 / SS120).